Consider the following 372-residue polypeptide: Chaperone protein DnaJ (372 aa).

Positions 5–69 (DYYEVLGVSK…DKRKQYDQFG (65 aa)) constitute a J domain. The CR-type zinc-finger motif lies at 139-221 (GVDKIIELDL…CKGKGKYLER (83 aa)). Positions 152, 155, 169, 172, 195, 198, 209, and 212 each coordinate Zn(2+). CXXCXGXG motif repeat units follow at residues 152 to 159 (CSACFGSG), 169 to 176 (CNNCHGTG), 195 to 202 (CNVCNGAG), and 209 to 216 (CKNCKGKG).

Belongs to the DnaJ family. As to quaternary structure, homodimer. Zn(2+) is required as a cofactor.

Its subcellular location is the cytoplasm. Participates actively in the response to hyperosmotic and heat shock by preventing the aggregation of stress-denatured proteins and by disaggregating proteins, also in an autonomous, DnaK-independent fashion. Unfolded proteins bind initially to DnaJ; upon interaction with the DnaJ-bound protein, DnaK hydrolyzes its bound ATP, resulting in the formation of a stable complex. GrpE releases ADP from DnaK; ATP binding to DnaK triggers the release of the substrate protein, thus completing the reaction cycle. Several rounds of ATP-dependent interactions between DnaJ, DnaK and GrpE are required for fully efficient folding. Also involved, together with DnaK and GrpE, in the DNA replication of plasmids through activation of initiation proteins. In Mycoplasma capricolum subsp. capricolum (strain California kid / ATCC 27343 / NCTC 10154), this protein is Chaperone protein DnaJ.